The sequence spans 141 residues: Cholinesterase (141 aa).

Asn39 is a glycosylation site (N-linked (GlcNAc...) asparagine). 49-50 is a binding site for substrate; it reads GG. Ser131 functions as the Acyl-ester intermediate in the catalytic mechanism. Ser131 carries the post-translational modification Phosphoserine.

This sequence belongs to the type-B carboxylesterase/lipase family. Homotetramer; disulfide-linked. Dimer of dimers. Present in most cells except erythrocytes.

Its subcellular location is the secreted. It carries out the reaction an acylcholine + H2O = a carboxylate + choline + H(+). Esterase with broad substrate specificity. Contributes to the inactivation of the neurotransmitter acetylcholine. Can degrade neurotoxic organophosphate esters. In Sus scrofa (Pig), this protein is Cholinesterase (BCHE).